The sequence spans 406 residues: ATP phosphoribosyltransferase regulatory subunit (406 aa).

This sequence belongs to the class-II aminoacyl-tRNA synthetase family. HisZ subfamily. As to quaternary structure, heteromultimer composed of HisG and HisZ subunits.

Its subcellular location is the cytoplasm. It functions in the pathway amino-acid biosynthesis; L-histidine biosynthesis; L-histidine from 5-phospho-alpha-D-ribose 1-diphosphate: step 1/9. In terms of biological role, required for the first step of histidine biosynthesis. May allow the feedback regulation of ATP phosphoribosyltransferase activity by histidine. This Methylococcus capsulatus (strain ATCC 33009 / NCIMB 11132 / Bath) protein is ATP phosphoribosyltransferase regulatory subunit.